A 235-amino-acid polypeptide reads, in one-letter code: MSRNVDKANSVLVRFQEQQAESAGGYKDYSRYQRPRNVSKVKSIKEANEWKRQVSKEIKQKSTRIYDPSLNEMQIAELNDELNNLFKEWKRWQWHIDHTLMEKKTKRKRLEDSHVLMNSGKLINGKRYFGRALELPEVKEWLKQSQRQNDGGSINTKCIPKDRNDFYYHGKVTAALTEFEANWTSILKAHYNVPVNEDEEEMSRQTQEIHVPTLADMEHWLVQRRKKKLMDELNL.

The protein belongs to the ISY1 family. Belongs to the NTC complex (or PRP19-associated complex), composed of at least CEF1, CLF1, ISY1, NTC20, SNT309, SYF1, SYF2, and PRP19. The NTC complex associates with the spliceosome after the release of the U1 and U4 snRNAs and forms the CWC spliceosome subcomplex (or CEF1-associated complex) reminiscent of a late-stage spliceosome composed also of the U2, U5 and U6 snRNAs and at least BUD13, BUD31, BRR2, CDC40, CUS1, CWC2, CWC15, CWC21, CWC22, CWC23, CWC24, CWC25, CWC27, ECM2, HSH155, IST3, LEA1, MSL1, PRP8, PRP9, PRP11, PRP21, PRP22, PRP45, PRP46, SLU7, SMB1, SMD1, SMD2, SMD3, SMX2, SMX3, SNU114, SPP2, RSE1 and YJU2. Interacts with CEF1, CWC2, CLF1, and SYF1.

It is found in the cytoplasm. It localises to the nucleus. Involved in pre-mRNA splicing and cell cycle control. As a component of the NTC complex (or PRP19-associated complex), associates to the spliceosome to mediate conformational rearrangement or to stabilize the structure of the spliceosome after U4 snRNA dissociation, which leads to spliceosome maturation. The cell cycle arrest of SYF2 defective cells may be due to the inefficient splicing of TUB1. Also involved in DNA repair. This is Pre-mRNA-splicing factor ISY1 (ISY1) from Saccharomyces cerevisiae (strain ATCC 204508 / S288c) (Baker's yeast).